The sequence spans 248 residues: Anamorsin homolog (248 aa).

The interval F4 to F129 is N-terminal SAM-like domain. Residues A130–K161 form a linker region. Residues C172, C181, C184, and C186 each contribute to the [2Fe-2S] cluster site. Residues C172 to C186 form a fe-S binding site A region. 4 residues coordinate [4Fe-4S] cluster: C209, C212, C220, and C223. 2 short sequence motifs (cx2C motif) span residues C209 to C212 and C220 to C223. A fe-S binding site B region spans residues C209–C223.

This sequence belongs to the anamorsin family. Monomer. [2Fe-2S] cluster serves as cofactor. The cofactor is [4Fe-4S] cluster.

The protein localises to the cytoplasm. It localises to the mitochondrion intermembrane space. Component of the cytosolic iron-sulfur (Fe-S) protein assembly (CIA) machinery. Required for the maturation of extramitochondrial Fe-S proteins. Part of an electron transfer chain functioning in an early step of cytosolic Fe-S biogenesis, facilitating the de novo assembly of a [4Fe-4S] cluster on the cytosolic Fe-S scaffold complex. Electrons are transferred from NADPH via a FAD- and FMN-containing diflavin oxidoreductase. Together with the diflavin oxidoreductase, also required for the assembly of the diferric tyrosyl radical cofactor of ribonucleotide reductase (RNR), probably by providing electrons for reduction during radical cofactor maturation in the catalytic small subunit. This Drosophila yakuba (Fruit fly) protein is Anamorsin homolog.